A 1034-amino-acid polypeptide reads, in one-letter code: FACT complex subunit spt-16 (1034 aa).

Composition is skewed to basic and acidic residues over residues E433 to K448, T463 to G481, and S493 to K503. The interval E433–Y511 is disordered. The stretch at L617–D642 forms a coiled coil. 2 stretches are compositionally biased toward acidic residues: residues A926–A950 and S959–E983. The segment at A926–K1034 is disordered. The segment covering S984–R1020 has biased composition (basic and acidic residues). The span at P1021–K1034 shows a compositional bias: basic residues.

It belongs to the peptidase M24 family. SPT16 subfamily. Component of the FACT complex, a stable heterodimer of spt-16 and hmg-3 or hmg-4.

Its subcellular location is the nucleus. The protein localises to the chromosome. Its function is as follows. Component of the FACT complex, a general chromatin factor that acts to reorganize nucleosomes. The FACT complex is involved in multiple processes that require DNA as a template such as mRNA elongation, DNA replication and DNA repair. During transcription elongation the FACT complex acts as a histone chaperone that both destabilizes and restores nucleosomal structure. It facilitates the passage of RNA polymerase II and transcription by promoting the dissociation of one histone H2A-H2B dimer from the nucleosome, then subsequently promotes the reestablishment of the nucleosome following the passage of RNA polymerase II. The sequence is that of FACT complex subunit spt-16 (spt-16) from Caenorhabditis briggsae.